Consider the following 360-residue polypeptide: MSRVYNFSAGPAAIPEEVLFTVRDELLDWHGIGMSIAEVSHRGEEFIGVAEEAARDLRELLAVPESYHILFLQGGSRLQFDMVPMNLLANHKKAVYIDSGVWSNLAIREAKNYCDPHLATNAKELNYTGIPDQATWDMPNEAAYFYYVDNETVNGIEFPFIPDTDLTLVCDMSSNLLSRPFDVSRYGLIFACAQKNMGLAGLTIVIVHDDLLKRSPLPTTPSYLQYALHAKERSFINTPPTFAWYLAGLIFKWVKNQGGVAVLAERNQRKAAKLYKFIDKSNFFDNPINPTYRSRMNVIFRLADERLNSLFLKEATENGLANLKGHRLLGGMRASIYNAMTEEGVDALINFMGQFEKRHG.

Residue Arg42 coordinates L-glutamate. Residues Trp102, Thr152, Asp171, and Gln194 each contribute to the pyridoxal 5'-phosphate site. An N6-(pyridoxal phosphate)lysine modification is found at Lys195. Residue 237 to 238 (NT) participates in pyridoxal 5'-phosphate binding.

The protein belongs to the class-V pyridoxal-phosphate-dependent aminotransferase family. SerC subfamily. In terms of assembly, homodimer. Pyridoxal 5'-phosphate is required as a cofactor.

The protein localises to the cytoplasm. It carries out the reaction O-phospho-L-serine + 2-oxoglutarate = 3-phosphooxypyruvate + L-glutamate. It catalyses the reaction 4-(phosphooxy)-L-threonine + 2-oxoglutarate = (R)-3-hydroxy-2-oxo-4-phosphooxybutanoate + L-glutamate. It functions in the pathway amino-acid biosynthesis; L-serine biosynthesis; L-serine from 3-phospho-D-glycerate: step 2/3. Its pathway is cofactor biosynthesis; pyridoxine 5'-phosphate biosynthesis; pyridoxine 5'-phosphate from D-erythrose 4-phosphate: step 3/5. Functionally, catalyzes the reversible conversion of 3-phosphohydroxypyruvate to phosphoserine and of 3-hydroxy-2-oxo-4-phosphonooxybutanoate to phosphohydroxythreonine. The chain is Phosphoserine aminotransferase from Coxiella burnetii (strain RSA 331 / Henzerling II).